Here is a 119-residue protein sequence, read N- to C-terminus: Large ribosomal subunit protein uL22 (119 aa).

This sequence belongs to the universal ribosomal protein uL22 family. Part of the 50S ribosomal subunit.

Functionally, this protein binds specifically to 23S rRNA; its binding is stimulated by other ribosomal proteins, e.g. L4, L17, and L20. It is important during the early stages of 50S assembly. It makes multiple contacts with different domains of the 23S rRNA in the assembled 50S subunit and ribosome. In terms of biological role, the globular domain of the protein is located near the polypeptide exit tunnel on the outside of the subunit, while an extended beta-hairpin is found that lines the wall of the exit tunnel in the center of the 70S ribosome. This is Large ribosomal subunit protein uL22 from Rickettsia peacockii (strain Rustic).